A 462-amino-acid chain; its full sequence is Cysteine--tRNA ligase (462 aa).

Zn(2+) is bound at residue Cys30. The 'HIGH' region motif lies at 32–42 (MTVYDYCHVGH). Positions 214, 239, and 243 each coordinate Zn(2+). The 'KMSKS' region signature appears at 271–275 (KMSKS). Lys274 contacts ATP.

Belongs to the class-I aminoacyl-tRNA synthetase family. As to quaternary structure, monomer. Requires Zn(2+) as cofactor.

It localises to the cytoplasm. The enzyme catalyses tRNA(Cys) + L-cysteine + ATP = L-cysteinyl-tRNA(Cys) + AMP + diphosphate. In Cupriavidus taiwanensis (strain DSM 17343 / BCRC 17206 / CCUG 44338 / CIP 107171 / LMG 19424 / R1) (Ralstonia taiwanensis (strain LMG 19424)), this protein is Cysteine--tRNA ligase.